Consider the following 154-residue polypeptide: Crossover junction endodeoxyribonuclease RuvC (154 aa).

Residues D7, E67, and D139 contribute to the active site. Residues D7, E67, and D139 each contribute to the Mg(2+) site.

This sequence belongs to the RuvC family. Homodimer which binds Holliday junction (HJ) DNA. The HJ becomes 2-fold symmetrical on binding to RuvC with unstacked arms; it has a different conformation from HJ DNA in complex with RuvA. In the full resolvosome a probable DNA-RuvA(4)-RuvB(12)-RuvC(2) complex forms which resolves the HJ. It depends on Mg(2+) as a cofactor.

Its subcellular location is the cytoplasm. It catalyses the reaction Endonucleolytic cleavage at a junction such as a reciprocal single-stranded crossover between two homologous DNA duplexes (Holliday junction).. The RuvA-RuvB-RuvC complex processes Holliday junction (HJ) DNA during genetic recombination and DNA repair. Endonuclease that resolves HJ intermediates. Cleaves cruciform DNA by making single-stranded nicks across the HJ at symmetrical positions within the homologous arms, yielding a 5'-phosphate and a 3'-hydroxyl group; requires a central core of homology in the junction. The consensus cleavage sequence is 5'-(A/T)TT(C/G)-3'. Cleavage occurs on the 3'-side of the TT dinucleotide at the point of strand exchange. HJ branch migration catalyzed by RuvA-RuvB allows RuvC to scan DNA until it finds its consensus sequence, where it cleaves and resolves the cruciform DNA. This Synechococcus sp. (strain CC9605) protein is Crossover junction endodeoxyribonuclease RuvC.